The chain runs to 422 residues: UDP-N-acetylglucosamine 1-carboxyvinyltransferase (422 aa).

22-23 lines the phosphoenolpyruvate pocket; it reads KN. Residue Arg94 participates in UDP-N-acetyl-alpha-D-glucosamine binding. Catalysis depends on Cys118, which acts as the Proton donor. Cys118 is modified (2-(S-cysteinyl)pyruvic acid O-phosphothioketal). UDP-N-acetyl-alpha-D-glucosamine-binding positions include 123–127, Asp309, and Ile331; that span reads RPVDL.

This sequence belongs to the EPSP synthase family. MurA subfamily.

The protein resides in the cytoplasm. It carries out the reaction phosphoenolpyruvate + UDP-N-acetyl-alpha-D-glucosamine = UDP-N-acetyl-3-O-(1-carboxyvinyl)-alpha-D-glucosamine + phosphate. The protein operates within cell wall biogenesis; peptidoglycan biosynthesis. Its function is as follows. Cell wall formation. Adds enolpyruvyl to UDP-N-acetylglucosamine. This is UDP-N-acetylglucosamine 1-carboxyvinyltransferase from Cereibacter sphaeroides (strain ATCC 17023 / DSM 158 / JCM 6121 / CCUG 31486 / LMG 2827 / NBRC 12203 / NCIMB 8253 / ATH 2.4.1.) (Rhodobacter sphaeroides).